The sequence spans 458 residues: UDP-N-acetylmuramoylalanine--D-glutamate ligase (458 aa).

118–124 is a binding site for ATP; that stretch reads GTNGKTT.

Belongs to the MurCDEF family.

It is found in the cytoplasm. The enzyme catalyses UDP-N-acetyl-alpha-D-muramoyl-L-alanine + D-glutamate + ATP = UDP-N-acetyl-alpha-D-muramoyl-L-alanyl-D-glutamate + ADP + phosphate + H(+). It participates in cell wall biogenesis; peptidoglycan biosynthesis. Its function is as follows. Cell wall formation. Catalyzes the addition of glutamate to the nucleotide precursor UDP-N-acetylmuramoyl-L-alanine (UMA). The polypeptide is UDP-N-acetylmuramoylalanine--D-glutamate ligase (Ligilactobacillus salivarius (strain UCC118) (Lactobacillus salivarius)).